We begin with the raw amino-acid sequence, 357 residues long: Velvet complex subunit 2 (357 aa).

Positions 32 to 341 constitute a Velvet domain; that stretch reads RRAERKYKLE…AQQGIKIPIR (310 aa).

This sequence belongs to the velvet family. VelB subfamily. Component of the heterotrimeric velvet complex composed of LAE1, VEL1 and VEL2; VEL1A acting as a bridging protein between LAE1 and VEL2. Forms a heterodimeric complex with VOS1; the formation of the VEL2-VOS1 complex is light-dependent.

It is found in the nucleus. The protein localises to the cytoplasm. Its function is as follows. Component of the velvet transcription factor complex that controls sexual/asexual developmental ratio in response to light, promoting sexual development in the darkness while stimulating asexual sporulation under illumination. The velvet complex acts as a global regulator for secondary metabolite gene expression. Component of the VEL2-VOS1 heterodimeric complex that plays a dual role in activating genes associated with spore maturation and repressing certain development-associated genes. The complex binds DNA through the DNA-binding domain of VOS1 that recognizes an 11-nucleotide consensus sequence 5'-CTGGCCGCGGC-3' consisting of two motifs in the promoters of key developmental regulatory genes. The VEL2-VOS1 complex is required for normal pseudothecium development and regulates asexual spore compartmentalization, pigmentation and germination. The polypeptide is Velvet complex subunit 2 (Cochliobolus heterostrophus (strain C5 / ATCC 48332 / race O) (Southern corn leaf blight fungus)).